The primary structure comprises 306 residues: GTPase Era (306 aa).

Positions lysine 14 to glutamate 181 constitute an Era-type G domain. The G1 stretch occupies residues glycine 22–serine 29. Glycine 22–serine 29 provides a ligand contact to GTP. Residues glutamine 48–asparagine 52 form a G2 region. The segment at aspartate 69–glycine 72 is G3. GTP contacts are provided by residues aspartate 69 to isoleucine 73 and asparagine 131 to aspartate 134. A G4 region spans residues asparagine 131–aspartate 134. Residues isoleucine 160–alanine 162 form a G5 region. One can recognise a KH type-2 domain in the interval threonine 212 to lysine 290.

It belongs to the TRAFAC class TrmE-Era-EngA-EngB-Septin-like GTPase superfamily. Era GTPase family. In terms of assembly, monomer.

It localises to the cytoplasm. Its subcellular location is the cell inner membrane. Its function is as follows. An essential GTPase that binds both GDP and GTP, with rapid nucleotide exchange. Plays a role in 16S rRNA processing and 30S ribosomal subunit biogenesis and possibly also in cell cycle regulation and energy metabolism. The polypeptide is GTPase Era (Syntrophus aciditrophicus (strain SB)).